The chain runs to 1272 residues: Vitamin B12-dependent ribonucleotide reductase (1272 aa).

Substrate contacts are provided by residues serine 153, 198-199 (AC), glycine 230, 474-478 (NPCSE), and 675-679 (PTGTI). Cysteines 199 and 487 form a disulfide. Asparagine 474 acts as the Proton acceptor in catalysis. The active-site Cysteine radical intermediate is cysteine 476. The active-site Proton acceptor is glutamate 478. The segment at 1120–1147 (TLVSSNEGDRAASEPKGSATAAPARGSA) is disordered.

It belongs to the ribonucleoside diphosphate reductase class-2 family. Adenosylcob(III)alamin serves as cofactor.

It carries out the reaction a 2'-deoxyribonucleoside 5'-diphosphate + [thioredoxin]-disulfide + H2O = a ribonucleoside 5'-diphosphate + [thioredoxin]-dithiol. Catalyzes the reduction of ribonucleotides to deoxyribonucleotides. May function to provide a pool of deoxyribonucleotide precursors for DNA repair during oxygen limitation and/or for immediate growth after restoration of oxygen. This chain is Vitamin B12-dependent ribonucleotide reductase (nrdJ), found in Agrobacterium fabrum (strain C58 / ATCC 33970) (Agrobacterium tumefaciens (strain C58)).